A 1337-amino-acid polypeptide reads, in one-letter code: ABC transporter D family member 1 (1337 aa).

Helical transmembrane passes span 24-44, 142-162, 247-267, and 342-362; these read ILLAAGIVAAGGTAVYLKSRV, APLFLRLISENIMLCFMLSTL, YASPKYIFWILAYVLGAGTAI, and FLLKYLGATVAVILIIEPFFS. The 279-residue stretch at 117–395 folds into the ABC transmembrane type-1 1 domain; the sequence is VFRTALSNRL…SVIISLFQAL (279 aa). The ABC transporter 1 domain maps to 448–695; the sequence is VEFSDVKVVT…DAMVVQRAFA (248 aa). Residue 481-488 coordinates ATP; that stretch reads GPNGSGKS. Residues 751 to 1049 enclose the ABC transmembrane type-1 2 domain; the sequence is LIPTIFDKQG…VVSQSFMAFG (299 aa). Residues 900–920 traverse the membrane as a helical segment; that stretch reads LLTGQRGVAILYTYMLLGLGF. In terms of domain architecture, ABC transporter 2 spans 1091–1337; that stretch reads LDSQDLLSFS…ELRSIEQTTE (247 aa). Residue 1130 to 1137 coordinates ATP; sequence GPNGSGKT.

It belongs to the ABC transporter superfamily. ABCD family. Peroxisomal fatty acyl CoA transporter (TC 3.A.1.203) subfamily.

It is found in the peroxisome membrane. The protein resides in the glyoxysome membrane. The enzyme catalyses an acyl-CoA(out) + ATP + H2O = an acyl-CoA(in) + ADP + phosphate + H(+). Its function is as follows. Contributes to the transport of fatty acids and their derivatives (acyl CoAs) across the peroxisomal membrane. Provides acetate to the glyoxylate cycle in developing seedlings. Involved in pollen tube elongation, ovule fertilization, and seeds germination after imbibition (controls the switch between the opposing developmental programs of dormancy and germination), probably by promoting beta-oxidation of storage lipids during gluconeogenesis. Required for biosynthesis of jasmonic acid and conversion of indole butyric acid to indole acetic acid. Confers sensitivity to monofluoroacetic acid (FAc), a toxic acetate analog, and to 2,4-dichlorophenoxybutyric acid (2,4-DB) and indole-3-butyric acid (IBA), two precursors of auxin after beta-oxidation. The polypeptide is ABC transporter D family member 1 (Arabidopsis thaliana (Mouse-ear cress)).